The primary structure comprises 465 residues: MKVYNTLTNKKEEFVTLVPGEVKMYVCGPTVYNFFHIGNARTFVVFDTIRRYLEYRGYKVKFIQNFTDIDDKMIKRANEEGSTVKELGDRFIKEYYKDADDLNIERATKNPRATEFMEEIIKFVSDLIEKGYAYEIDGDVYFSTKKFNSYGKLSGQNLEELQLGSRINVDERKKDPMDFAIWKNQKPGEPAWESPWGMGRPGWHIECSCMAYNLLGETIDIHAGGSDLSFPHHENEIAQSEARTGKQFAKYWLHSAFVNVNNQKMSKSLNNFFTAREILEKYDADVLRMFMLSGHYRTQINFSMELLDSTKAALDRLYNSINNLENLLDEVKNEELRDEELEYKNELQKYKEKYIEKMDDDFNTADAISVIFDLIRDVNTNVTIESSKELVKYTLDLIRELGNPLGILQESTKASLEEEIEKLIEERQKARKEKNWALADKIRDDLKERGIVLEDTPQGVRWKQI.

Zn(2+) is bound at residue C27. The short motif at 29 to 39 (PTVYNFFHIGN) is the 'HIGH' region element. The Zn(2+) site is built by C207, H232, and E236. Positions 264–268 (KMSKS) match the 'KMSKS' region motif. ATP is bound at residue K267.

It belongs to the class-I aminoacyl-tRNA synthetase family. In terms of assembly, monomer. Requires Zn(2+) as cofactor.

The protein localises to the cytoplasm. It catalyses the reaction tRNA(Cys) + L-cysteine + ATP = L-cysteinyl-tRNA(Cys) + AMP + diphosphate. This Clostridium botulinum (strain Loch Maree / Type A3) protein is Cysteine--tRNA ligase.